Consider the following 90-residue polypeptide: Acylphosphatase (90 aa).

The 86-residue stretch at 5 to 90 folds into the Acylphosphatase-like domain; that stretch reads SFVVRVWGLV…PPKGSGFHTN (86 aa). Residues Arg-20 and Asn-38 contribute to the active site.

The protein belongs to the acylphosphatase family.

It catalyses the reaction an acyl phosphate + H2O = a carboxylate + phosphate + H(+). The polypeptide is Acylphosphatase (acyP) (Aeromonas hydrophila subsp. hydrophila (strain ATCC 7966 / DSM 30187 / BCRC 13018 / CCUG 14551 / JCM 1027 / KCTC 2358 / NCIMB 9240 / NCTC 8049)).